The chain runs to 582 residues: uncharacterized protein (582 aa).

A signal peptide spans 1 to 27; the sequence is MNYAVLPPELNSLRMFTGAGSAPMLAA. Residues 241 to 257 are compositionally biased toward gly residues; the sequence is GNGRAGLPGSGNVGNGN. The interval 241 to 278 is disordered; it reads GNGRAGLPGSGNVGNGNLGNSNLGSGNTGNSNVGFGNT. A compositionally biased stretch (low complexity) spans 258-278; the sequence is LGNSNLGSGNTGNSNVGFGNT.

It belongs to the mycobacterial PPE family.

This is an uncharacterized protein from Mycobacterium tuberculosis (strain ATCC 25618 / H37Rv).